Consider the following 640-residue polypeptide: RecBCD enzyme subunit RecD (640 aa).

194 to 201 lines the ATP pocket; the sequence is GGPGTGKT.

The protein belongs to the RecD family. In terms of assembly, heterotrimer of RecB, RecC and RecD. All subunits contribute to DNA-binding.

It carries out the reaction Couples ATP hydrolysis with the unwinding of duplex DNA at the replication fork by translocating in the 5'-3' direction. This creates two antiparallel DNA single strands (ssDNA). The leading ssDNA polymer is the template for DNA polymerase III holoenzyme which synthesizes a continuous strand.. The enzyme catalyses ATP + H2O = ADP + phosphate + H(+). Functionally, a helicase/nuclease that prepares dsDNA breaks (DSB) for recombinational DNA repair. Binds to DSBs and unwinds DNA via a highly rapid and processive ATP-dependent bidirectional helicase activity. Unwinds dsDNA until it encounters a Chi (crossover hotspot instigator) sequence from the 3' direction. Cuts ssDNA a few nucleotides 3' to the Chi site. The properties and activities of the enzyme are changed at Chi. The Chi-altered holoenzyme produces a long 3'-ssDNA overhang and facilitates RecA-binding to the ssDNA for homologous DNA recombination and repair. Holoenzyme degrades any linearized DNA that is unable to undergo homologous recombination. In the holoenzyme this subunit has ssDNA-dependent ATPase and 5'-3' helicase activity. When added to pre-assembled RecBC greatly stimulates nuclease activity and augments holoenzyme processivity. Negatively regulates the RecA-loading ability of RecBCD. This is RecBCD enzyme subunit RecD from Haemophilus influenzae (strain ATCC 51907 / DSM 11121 / KW20 / Rd).